The sequence spans 143 residues: Putative pre-16S rRNA nuclease (143 aa).

It belongs to the YqgF nuclease family.

It localises to the cytoplasm. Functionally, could be a nuclease involved in processing of the 5'-end of pre-16S rRNA. This is Putative pre-16S rRNA nuclease from Salinibacter ruber (strain DSM 13855 / M31).